The chain runs to 536 residues: Lysosomal acid glucosylceramidase (536 aa).

An N-terminal signal peptide occupies residues 1–39; sequence MEFSSPSREECPKPSGRVNIMAGSLTGLLLLQAVSWASG. 2 disulfides stabilise this stretch: cysteine 43–cysteine 55 and cysteine 57–cysteine 62. Residues asparagine 58, asparagine 98, and asparagine 185 are each glycosylated (N-linked (GlcNAc...) asparagine). Glutamate 274 serves as the catalytic Proton donor. Residue asparagine 309 is glycosylated (N-linked (GlcNAc...) asparagine). Residue glutamate 379 is the Nucleophile of the active site. Residue asparagine 501 is glycosylated (N-linked (GlcNAc...) asparagine).

This sequence belongs to the glycosyl hydrolase 30 family. As to quaternary structure, interacts with saposin-C. Interacts with SCARB2. Interacts with TCP1. Interacts with GRN; this interaction prevents aggregation of GBA1-SCARB2 complex via interaction with HSPA1A upon stress.

The protein localises to the lysosome membrane. The enzyme catalyses a beta-D-glucosyl-(1&lt;-&gt;1')-N-acylsphing-4-enine + H2O = an N-acylsphing-4-enine + D-glucose. It carries out the reaction a beta-D-galactosyl-(1&lt;-&gt;1')-N-acylsphing-4-enine + H2O = an N-acylsphing-4-enine + D-galactose. The catalysed reaction is cholesteryl 3-beta-D-glucoside + H2O = cholesterol + D-glucose. It catalyses the reaction a beta-D-glucosyl-(1&lt;-&gt;1')-N-acylsphing-4-enine + cholesterol = cholesteryl 3-beta-D-glucoside + an N-acylsphing-4-enine. The enzyme catalyses beta-D-glucosyl-N-(9Z-octadecenoyl)-sphing-4E-enine + cholesterol = N-(9Z-octadecenoyl)-sphing-4-enine + cholesteryl 3-beta-D-glucoside. It carries out the reaction beta-D-glucosyl-N-octanoylsphing-4E-enine + cholesterol = N-octanoylsphing-4-enine + cholesteryl 3-beta-D-glucoside. The catalysed reaction is beta-D-glucosyl-N-dodecanoylsphing-4-enine + cholesterol = N-dodecanoylsphing-4-enine + cholesteryl 3-beta-D-glucoside. It catalyses the reaction beta-D-glucosyl-(1&lt;-&gt;1)-N-octadecanoylsphing-4-enine + cholesterol = N-octadecanoylsphing-4-enine + cholesteryl 3-beta-D-glucoside. The enzyme catalyses beta-D-glucosyl-(1&lt;-&gt;1')-N-(15Z-tetracosenoyl)-sphing-4-enine + cholesterol = N-(15Z-tetracosenoyl)-sphing-4-enine + cholesteryl 3-beta-D-glucoside. It carries out the reaction a beta-D-galactosyl-(1&lt;-&gt;1')-N-acylsphing-4-enine + cholesterol = cholesteryl 3-beta-D-galactoside + an N-acylsphing-4-enine. The catalysed reaction is 1-(beta-D-galactosyl)-N-dodecanoylsphing-4-enine + cholesterol = cholesteryl 3-beta-D-galactoside + N-dodecanoylsphing-4-enine. It catalyses the reaction a beta-D-xylosyl-(1&lt;-&gt;1')-N-acylsphing-4-enine + cholesterol = cholesteryl 3-beta-D-xyloside + an N-acylsphing-4-enine. The enzyme catalyses beta-D-xylosyl-(1&lt;-&gt;1')-N-(9Z-octadecenoyl)-sphing-4-enine + cholesterol = cholesteryl 3-beta-D-xyloside + N-(9Z-octadecenoyl)-sphing-4-enine. Its pathway is steroid metabolism; cholesterol metabolism. It participates in sphingolipid metabolism. Functionally, glucosylceramidase that catalyzes, within the lysosomal compartment, the hydrolysis of glucosylceramides/GlcCers (such as beta-D-glucosyl-(1&lt;-&gt;1')-N-acylsphing-4-enine) into free ceramides (such as N-acylsphing-4-enine) and glucose. Plays a central role in the degradation of complex lipids and the turnover of cellular membranes. Through the production of ceramides, participates in the PKC-activated salvage pathway of ceramide formation. Catalyzes the glucosylation of cholesterol, through a transglucosylation reaction where glucose is transferred from GlcCer to cholesterol. GlcCer containing mono-unsaturated fatty acids (such as beta-D-glucosyl-N-(9Z-octadecenoyl)-sphing-4-enine) are preferred as glucose donors for cholesterol glucosylation when compared with GlcCer containing same chain length of saturated fatty acids (such as beta-D-glucosyl-N-octadecanoyl-sphing-4-enine). Under specific conditions, may alternatively catalyze the reverse reaction, transferring glucose from cholesteryl 3-beta-D-glucoside to ceramide. Can also hydrolyze cholesteryl 3-beta-D-glucoside producing glucose and cholesterol. Catalyzes the hydrolysis of galactosylceramides/GalCers (such as beta-D-galactosyl-(1&lt;-&gt;1')-N-acylsphing-4-enine), as well as the transfer of galactose between GalCers and cholesterol in vitro, but with lower activity than with GlcCers. Contrary to GlcCer and GalCer, xylosylceramide/XylCer (such as beta-D-xyosyl-(1&lt;-&gt;1')-N-acylsphing-4-enine) is not a good substrate for hydrolysis, however it is a good xylose donor for transxylosylation activity to form cholesteryl 3-beta-D-xyloside. The chain is Lysosomal acid glucosylceramidase (GBA1) from Pongo abelii (Sumatran orangutan).